The sequence spans 110 residues: Replication initiation control protein YabA (110 aa).

Zn(2+)-binding residues include His84, Cys86, Cys100, and Cys103.

This sequence belongs to the YabA family. As to quaternary structure, homotetramer. Interacts with both DnaA and DnaN, acting as a bridge between these two proteins. The cofactor is Zn(2+).

It localises to the cytoplasm. The protein resides in the nucleoid. Its function is as follows. Involved in control of chromosome replication initiation. Inhibits the cooperative binding of DnaA to the oriC region, thus negatively regulating initiation of chromosome replication. Inhibits the ability of DnaA-ATP to form a helix on DNA; does not disassemble preformed DnaA-DNA helices. Decreases the residence time of DnaA on the chromosome at its binding sites (oriC, replication forks and promoter-binding sites). Tethers DnaA to the replication machinery via the DNA polymerase beta sliding clamp subunit (dnaN). Associates with oriC and other DnaA targets on the chromosome in a DnaA-dependent manner. The sequence is that of Replication initiation control protein YabA from Streptococcus mutans serotype c (strain ATCC 700610 / UA159).